Consider the following 612-residue polypeptide: Dihydroxy-acid dehydratase (612 aa).

A Mg(2+)-binding site is contributed by aspartate 81. Position 122 (cysteine 122) interacts with [2Fe-2S] cluster. Positions 123 and 124 each coordinate Mg(2+). N6-carboxylysine is present on lysine 124. Cysteine 196 is a [2Fe-2S] cluster binding site. Residue glutamate 492 participates in Mg(2+) binding. Serine 518 serves as the catalytic Proton acceptor.

The protein belongs to the IlvD/Edd family. In terms of assembly, homodimer. Requires [2Fe-2S] cluster as cofactor. Mg(2+) serves as cofactor.

The enzyme catalyses (2R)-2,3-dihydroxy-3-methylbutanoate = 3-methyl-2-oxobutanoate + H2O. It catalyses the reaction (2R,3R)-2,3-dihydroxy-3-methylpentanoate = (S)-3-methyl-2-oxopentanoate + H2O. The protein operates within amino-acid biosynthesis; L-isoleucine biosynthesis; L-isoleucine from 2-oxobutanoate: step 3/4. It functions in the pathway amino-acid biosynthesis; L-valine biosynthesis; L-valine from pyruvate: step 3/4. Functions in the biosynthesis of branched-chain amino acids. Catalyzes the dehydration of (2R,3R)-2,3-dihydroxy-3-methylpentanoate (2,3-dihydroxy-3-methylvalerate) into 2-oxo-3-methylpentanoate (2-oxo-3-methylvalerate) and of (2R)-2,3-dihydroxy-3-methylbutanoate (2,3-dihydroxyisovalerate) into 2-oxo-3-methylbutanoate (2-oxoisovalerate), the penultimate precursor to L-isoleucine and L-valine, respectively. The chain is Dihydroxy-acid dehydratase from Paracoccus denitrificans (strain Pd 1222).